Reading from the N-terminus, the 90-residue chain is Small ribosomal subunit protein bS16 (90 aa).

Belongs to the bacterial ribosomal protein bS16 family.

The sequence is that of Small ribosomal subunit protein bS16 from Streptococcus sanguinis (strain SK36).